A 332-amino-acid polypeptide reads, in one-letter code: MDPRSEVLLRQAELFGGRVLLAGLPADDLLGQLAGATAWSWHAGEQQQLDKRFGGRCSFGVAPPQGVFDTAVLFLPKSRELTDYLLQTLAARLPGRPLYLVGEKRGGIERAAKQLGSFGRARKLDSARHCQLWQVEVEQAPAAPNLDALARHFTLQLADGPLEVVSLPGVFSHGRLDLGSALLLEHLDNLPGGRLLDFGCGAGILGATLKRRYPQSELVLLDVDAFAVESSRRTLAANGLEAEVIAGDGIDAAPRQLAAIISNPPFHQGVHTSYHASETLIERAAEHLQASGEMRIVANAFLRYPPLIERHLGTCQTLAERDGFRIYRAVRG.

It belongs to the methyltransferase superfamily. RsmC family. Monomer.

The protein localises to the cytoplasm. It carries out the reaction guanosine(1207) in 16S rRNA + S-adenosyl-L-methionine = N(2)-methylguanosine(1207) in 16S rRNA + S-adenosyl-L-homocysteine + H(+). Its function is as follows. Specifically methylates the guanine in position 1207 of 16S rRNA in the 30S particle. This Stutzerimonas stutzeri (strain A1501) (Pseudomonas stutzeri) protein is Ribosomal RNA small subunit methyltransferase C.